A 283-amino-acid chain; its full sequence is MSDWSALHQLLEKVQPYSTAGGKVWIKVLFIFRILLLGTAIESAWSDEQFEFHCNTQQPGCENVCYDHAFPISHVRLWVLQVIFVSVPILLYLAHVYYVVRQNKKLNKQEEELEAAHFNEASVERHLETIAGEQFKCGSEEQSKVKMRGRLLLTYMASIFFKSVFEMAFLLIQWYIYGFTLSALYICEQSPCPRRVDCFLSRPTEKTIFILFMFVVSVVSFVLDIIELFYVLFKAIKNRMRKAEDEVYCDELPCPSHVSSSTVLTTIDSSEQAVPVELSSVCI.

Topologically, residues 1–23 (MSDWSALHQLLEKVQPYSTAGGK) are cytoplasmic. Residues 24-41 (VWIKVLFIFRILLLGTAI) form a helical membrane-spanning segment. The Extracellular segment spans residues 42–76 (ESAWSDEQFEFHCNTQQPGCENVCYDHAFPISHVR). A helical membrane pass occupies residues 77-99 (LWVLQVIFVSVPILLYLAHVYYV). Topologically, residues 100–150 (VRQNKKLNKQEEELEAAHFNEASVERHLETIAGEQFKCGSEEQSKVKMRGR) are cytoplasmic. Residues 151-173 (LLLTYMASIFFKSVFEMAFLLIQ) form a helical membrane-spanning segment. At 174 to 208 (WYIYGFTLSALYICEQSPCPRRVDCFLSRPTEKTI) the chain is on the extracellular side. Residues 209-231 (FILFMFVVSVVSFVLDIIELFYV) traverse the membrane as a helical segment. Topologically, residues 232–283 (LFKAIKNRMRKAEDEVYCDELPCPSHVSSSTVLTTIDSSEQAVPVELSSVCI) are cytoplasmic.

Belongs to the connexin family. Alpha-type (group II) subfamily. In terms of assembly, a connexon is composed of a hexamer of connexins.

The protein resides in the cell membrane. It localises to the cell junction. It is found in the gap junction. Functionally, one gap junction consists of a cluster of closely packed pairs of transmembrane channels, the connexons, through which materials of low MW diffuse from one cell to a neighboring cell. The sequence is that of Gap junction alpha-6 protein (Gja6) from Mus musculus (Mouse).